Here is a 468-residue protein sequence, read N- to C-terminus: Asparagine--tRNA ligase (468 aa).

It belongs to the class-II aminoacyl-tRNA synthetase family. As to quaternary structure, homodimer.

It is found in the cytoplasm. The enzyme catalyses tRNA(Asn) + L-asparagine + ATP = L-asparaginyl-tRNA(Asn) + AMP + diphosphate + H(+). In Parabacteroides distasonis (strain ATCC 8503 / DSM 20701 / CIP 104284 / JCM 5825 / NCTC 11152), this protein is Asparagine--tRNA ligase.